The sequence spans 406 residues: Peptidase T (406 aa).

Residue His-82 participates in Zn(2+) binding. Residue Asp-84 is part of the active site. Asp-142 lines the Zn(2+) pocket. The active-site Proton acceptor is Glu-176. Zn(2+) contacts are provided by Glu-177, Asp-199, and His-381.

This sequence belongs to the peptidase M20B family. The cofactor is Zn(2+).

The protein resides in the cytoplasm. It catalyses the reaction Release of the N-terminal residue from a tripeptide.. In terms of biological role, cleaves the N-terminal amino acid of tripeptides. The chain is Peptidase T from Streptococcus agalactiae serotype III (strain NEM316).